The sequence spans 497 residues: Thiamine transporter 1 (497 aa).

Methionine 1 bears the N-acetylmethionine mark. Topologically, residues 1–28 (MDVPGPVSRRAAAAAATVLLRTARVRRE) are cytoplasmic. Residues 29-46 (CWFLPTALLCAYGFFASL) form a helical membrane-spanning segment. Residues 47-72 (RPSEPFLTPYLLGPDKNLTEREVFNE) are Extracellular-facing. A glycan (N-linked (GlcNAc...) asparagine) is linked at asparagine 63. A helical membrane pass occupies residues 73–91 (IYPVWTYSYLVLLFPVFLA). Over 92-99 (TDYLRYKP) the chain is Cytoplasmic. The chain crosses the membrane as a helical span at residues 100 to 118 (VVLLQGLSLIVTWFMLLYA). Over 119–128 (QGLLAIQFLE) the chain is Extracellular. A helical transmembrane segment spans residues 129-149 (FFYGIATATEIAYYSYIYSVV). Over 150–165 (DLGMYQKVTSYCRSAT) the chain is Cytoplasmic. Residues 166 to 185 (LVGFTVGSVLGQILVSVAGW) form a helical membrane-spanning segment. The Extracellular segment spans residues 186-191 (SLFSLN). Residues 192–208 (VISLTCVSVAFAVAWFL) traverse the membrane as a helical segment. Topologically, residues 209 to 285 (PMPQKSLFFH…LLVLKVLWND (77 aa)) are cytoplasmic. Serine 222 bears the Phosphoserine mark. The helical transmembrane segment at 286–310 (FLMCYSSRPLLCWSVWWALSTCGYF) threads the bilayer. The Extracellular segment spans residues 311–337 (QVVNYTQGLWEKVMPSRYAAIYNGGVE). An N-linked (GlcNAc...) asparagine glycan is attached at asparagine 314. The chain crosses the membrane as a helical span at residues 338-354 (AVSTLLGAVAVFAVGYI). Topologically, residues 355–363 (KISWSTWGE) are cytoplasmic. The chain crosses the membrane as a helical span at residues 364–380 (MTLSLFSLLIAAAVYIM). Topologically, residues 381-386 (DTVGNI) are extracellular. A helical membrane pass occupies residues 387–409 (WVCYASYVVFRIIYMLLITIATF). Residues 410–419 (QIAANLSMER) lie on the Cytoplasmic side of the membrane. The chain crosses the membrane as a helical span at residues 420–443 (YALVFGVNTFIALALQTLLTLIVV). Residues 444–455 (DASGLGLEITTQ) are Extracellular-facing. Residues 456 to 479 (FLIYASYFALIAVVFLASGAVSVM) traverse the membrane as a helical segment. Over 480-497 (KKCRKLEDPQSSSQVTTS) the chain is Cytoplasmic.

Belongs to the reduced folate carrier (RFC) transporter (TC 2.A.48) family. Interacts with TSPAN1; this interaction increases the stability of SLC19A2. Interacts with TMEM63B. As to expression, ubiquitous; most abundant in skeletal and cardiac muscle. Medium expression in placenta, heart, liver and kidney, low in lung.

The protein localises to the cell membrane. It carries out the reaction thiamine(out) + H(+)(in) = thiamine(in) + H(+)(out). The enzyme catalyses pyridoxine(out) + n H(+)(out) = pyridoxine(in) + n H(+)(in). Its activity is regulated as follows. Pyridoxine transport is inhibited by carbonyl cyanide p-trifluoromethoxyphenylhydrazone (FCCP) and carbonyl cyanide m-chlorophenylhydrazone (CCCP). High-affinity transporter for the intake of thiamine. Mediates H(+)-dependent pyridoxine transport. The chain is Thiamine transporter 1 (SLC19A2) from Homo sapiens (Human).